We begin with the raw amino-acid sequence, 521 residues long: Signal recognition particle protein (521 aa).

Residues 107 to 114 (GLQGSGKT), 196 to 200 (DTAGR), and 254 to 257 (TKLD) contribute to the GTP site. Positions 436–505 (GGMGIPGMGR…MPDGLNELPP (70 aa)) are disordered. Residues 447 to 462 (SATRKSKGGKGKKRAR) are compositionally biased toward basic residues.

The protein belongs to the GTP-binding SRP family. SRP54 subfamily. As to quaternary structure, part of the signal recognition particle protein translocation system, which is composed of SRP and FtsY.

The protein localises to the cytoplasm. It catalyses the reaction GTP + H2O = GDP + phosphate + H(+). Involved in targeting and insertion of nascent membrane proteins into the cytoplasmic membrane. Binds to the hydrophobic signal sequence of the ribosome-nascent chain (RNC) as it emerges from the ribosomes. The SRP-RNC complex is then targeted to the cytoplasmic membrane where it interacts with the SRP receptor FtsY. The chain is Signal recognition particle protein from Mycobacterium leprae (strain TN).